A 312-amino-acid polypeptide reads, in one-letter code: Retron Ec83 reverse transcriptase (312 aa).

Residues 14-239 (PDFDVLLKSR…HNRHVTGVTL (226 aa)) form the Reverse transcriptase domain. Aspartate 97, aspartate 185, and aspartate 186 together coordinate Mg(2+).

This sequence belongs to the bacterial reverse transcriptase family.

The catalysed reaction is DNA(n) + a 2'-deoxyribonucleoside 5'-triphosphate = DNA(n+1) + diphosphate. Its function is as follows. Reverse transcriptase (RT) component of antiviral defense system retron Ec83, composed of a non-coding RNA (ncRNA), this reverse transcriptase (RT), a probable ATPase and a putative HNH endonuclease. Expression of retron Ec83 confers protection against bacteriophages T2, T4 and T6. At multiplicity of infection (MOI) of 0.02 cultures slow growth when infected with T4 but do not collapse, at MOI 2 cultures enter growth stasis. Responsible for synthesis of msDNA-Ec83 (a linear ssDNA with a 5'-terminal phosphate residue). Unlike most known msDNAs the mature product from the original strain does not have an RNA component. When the ncRNA plus RT are expressed in strain K12 / JM109 only linear DNA is seen in stationary phase cells, but logarithmic phase cells have both a linear and branched msDNA (a branched molecule with RNA linked by a 2',5'-phosphodiester bond to ssDNA, a 'classic' retron). The branched msDNA is probably the precursor for the mature linear msDNA, the precursor is cleaved endonucleolytically by ExoVII (xseA-xseB) leaving the observed mature 5'-phosphate ssDNA terminus. The retron transcript serves as primer (from a conserved internal G residue) and template for the reaction, and codes for the RT. Overexpression of the ncRNA and RT, which leads to increased levels of msDNA, is mutagenic in vivo. This may be due to a mismatch in the msDNA stem which binds and sequesters MutS and/or MutL. The sequence is that of Retron Ec83 reverse transcriptase from Escherichia coli.